The following is a 346-amino-acid chain: tRNA N6-adenosine threonylcarbamoyltransferase (346 aa).

Positions 110 and 114 each coordinate Fe cation. Residues 132-136 (LLSGG), Asp165, Gly178, and Asn274 each bind substrate. Asp298 is a Fe cation binding site.

The protein belongs to the KAE1 / TsaD family. Fe(2+) is required as a cofactor.

It localises to the cytoplasm. The catalysed reaction is L-threonylcarbamoyladenylate + adenosine(37) in tRNA = N(6)-L-threonylcarbamoyladenosine(37) in tRNA + AMP + H(+). Functionally, required for the formation of a threonylcarbamoyl group on adenosine at position 37 (t(6)A37) in tRNAs that read codons beginning with adenine. Is involved in the transfer of the threonylcarbamoyl moiety of threonylcarbamoyl-AMP (TC-AMP) to the N6 group of A37, together with TsaE and TsaB. TsaD likely plays a direct catalytic role in this reaction. The chain is tRNA N6-adenosine threonylcarbamoyltransferase from Borreliella burgdorferi (strain ZS7) (Borrelia burgdorferi).